The following is a 180-amino-acid chain: Molybdopterin synthase catalytic subunit (180 aa).

Residues 1–10 (MSSTTPTTEP) show a composition bias toward polar residues. The tract at residues 1–31 (MSSTTPTTEPDQLPPHLDPQTYPRTTTNPTL) is disordered. The span at 21–31 (TYPRTTTNPTL) shows a compositional bias: low complexity. Residues 131-132 (HR), lysine 147, and 154-156 (KKE) contribute to the substrate site.

The protein belongs to the MoaE family. MOCS2B subfamily. As to quaternary structure, heterotetramer; composed of 2 small (MOCS2A) and 2 large (MOCS2B) subunits.

It localises to the cytoplasm. The catalysed reaction is 2 [molybdopterin-synthase sulfur-carrier protein]-C-terminal-Gly-aminoethanethioate + cyclic pyranopterin phosphate + H2O = molybdopterin + 2 [molybdopterin-synthase sulfur-carrier protein]-C-terminal Gly-Gly + 2 H(+). It participates in cofactor biosynthesis; molybdopterin biosynthesis. Its function is as follows. Catalytic subunit of the molybdopterin synthase complex, a complex that catalyzes the conversion of precursor Z into molybdopterin. Acts by mediating the incorporation of 2 sulfur atoms from thiocarboxylated MOCS2A into precursor Z to generate a dithiolene group. In Aspergillus niger (strain ATCC MYA-4892 / CBS 513.88 / FGSC A1513), this protein is Molybdopterin synthase catalytic subunit.